A 435-amino-acid polypeptide reads, in one-letter code: T-box transcription factor T (435 aa).

The segment at residues Leu51 to Asp219 is a DNA-binding region (T-box). Disordered regions lie at residues Pro280–Cys310 and Ala384–Asp412. The segment covering Arg297–Cys310 has biased composition (polar residues).

As to quaternary structure, monomer. Binds DNA as a monomer.

The protein resides in the nucleus. Functionally, involved in the transcriptional regulation of genes required for mesoderm formation and differentiation. Binds to a palindromic site (called T site) and activates gene transcription when bound to such a site. In Canis lupus familiaris (Dog), this protein is T-box transcription factor T.